The sequence spans 412 residues: Putative F-box protein At3g22940 (412 aa).

An F-box domain is found at 1-38; the sequence is MPLEEILSRLPLKSTRAVRSTCKKWDSLFKNRSFISKA.

The polypeptide is Putative F-box protein At3g22940 (Arabidopsis thaliana (Mouse-ear cress)).